The following is a 400-amino-acid chain: Tryptophan synthase beta chain (400 aa).

Lysine 91 carries the post-translational modification N6-(pyridoxal phosphate)lysine.

This sequence belongs to the TrpB family. Tetramer of two alpha and two beta chains. Pyridoxal 5'-phosphate serves as cofactor.

It carries out the reaction (1S,2R)-1-C-(indol-3-yl)glycerol 3-phosphate + L-serine = D-glyceraldehyde 3-phosphate + L-tryptophan + H2O. It participates in amino-acid biosynthesis; L-tryptophan biosynthesis; L-tryptophan from chorismate: step 5/5. In terms of biological role, the beta subunit is responsible for the synthesis of L-tryptophan from indole and L-serine. The sequence is that of Tryptophan synthase beta chain from Listeria monocytogenes serovar 1/2a (strain ATCC BAA-679 / EGD-e).